A 141-amino-acid polypeptide reads, in one-letter code: Large ribosomal subunit protein uL11 (141 aa).

It belongs to the universal ribosomal protein uL11 family. In terms of assembly, part of the ribosomal stalk of the 50S ribosomal subunit. Interacts with L10 and the large rRNA to form the base of the stalk. L10 forms an elongated spine to which L12 dimers bind in a sequential fashion forming a multimeric L10(L12)X complex. One or more lysine residues are methylated.

Forms part of the ribosomal stalk which helps the ribosome interact with GTP-bound translation factors. This chain is Large ribosomal subunit protein uL11, found in Chlorobaculum parvum (strain DSM 263 / NCIMB 8327) (Chlorobium vibrioforme subsp. thiosulfatophilum).